The following is a 364-amino-acid chain: Selection and upkeep of intraepithelial T-cells protein 11 (364 aa).

The signal sequence occupies residues 1–28 (MEPSASCLPGFFMVCILLKITVLTQVMS). An Ig-like V-type domain is found at 29 to 118 (LDIQINTQIP…TNQEKRRSII (90 aa)). Residues 29–138 (LDIQINTQIP…MSLMSNNLLY (110 aa)) are Extracellular-facing. A disulfide bond links Cys-48 and Cys-102. The helical transmembrane segment at 139–159 (LGIYLIFILFLNFLKGILFCL) threads the bilayer. The Cytoplasmic segment spans residues 160-186 (TKRLVHFRKRMIKIKKVWSNKTRACCP). A helical membrane pass occupies residues 187 to 207 (LIWEFLEIVLFIAFLPLYLMF). Topologically, residues 208-230 (RIRVFTLDEAHILYNNWLWKVCK) are extracellular. The helical transmembrane segment at 231 to 251 (TLIAMMILFTVLILFLLWTLN) threads the bilayer. Over 252-364 (RYGKMPCLSS…LYSKLGNLTH (113 aa)) the chain is Cytoplasmic.

It belongs to the SKINT family. Expressed in skin and thymus.

Its subcellular location is the membrane. Functionally, may act by engaging a cell surface molecule on immature T-cells in the embryonic thymus. In Mus musculus (Mouse), this protein is Selection and upkeep of intraepithelial T-cells protein 11 (Skint11).